The chain runs to 122 residues: Holo-[acyl-carrier-protein] synthase (122 aa).

Residues Asp8 and Glu56 each contribute to the Mg(2+) site.

The protein belongs to the P-Pant transferase superfamily. AcpS family. Requires Mg(2+) as cofactor.

The protein resides in the cytoplasm. The catalysed reaction is apo-[ACP] + CoA = holo-[ACP] + adenosine 3',5'-bisphosphate + H(+). In terms of biological role, transfers the 4'-phosphopantetheine moiety from coenzyme A to a Ser of acyl-carrier-protein. In Alkaliphilus metalliredigens (strain QYMF), this protein is Holo-[acyl-carrier-protein] synthase.